The sequence spans 394 residues: Elongation factor Tu (394 aa).

Positions 10–204 (KPHVNIGTIG…AVDSYIPQPV (195 aa)) constitute a tr-type G domain. Positions 19 to 26 (GHVDHGKT) are G1. A GTP-binding site is contributed by 19 to 26 (GHVDHGKT). Threonine 26 contacts Mg(2+). Residues 60-64 (GITIS) form a G2 region. The tract at residues 81–84 (DCPG) is G3. GTP is bound by residues 81-85 (DCPGH) and 136-139 (NKID). A G4 region spans residues 136 to 139 (NKID). The tract at residues 174 to 176 (SAL) is G5.

It belongs to the TRAFAC class translation factor GTPase superfamily. Classic translation factor GTPase family. EF-Tu/EF-1A subfamily. In terms of assembly, monomer.

The protein localises to the cytoplasm. The enzyme catalyses GTP + H2O = GDP + phosphate + H(+). Its function is as follows. GTP hydrolase that promotes the GTP-dependent binding of aminoacyl-tRNA to the A-site of ribosomes during protein biosynthesis. The protein is Elongation factor Tu of Rickettsia conorii (strain ATCC VR-613 / Malish 7).